We begin with the raw amino-acid sequence, 121 residues long: Small ribosomal subunit protein uS13 (121 aa).

The interval 92 to 121 (KRGLPVRGQRTRTNARTRKGPRRAAASLKK) is disordered.

It belongs to the universal ribosomal protein uS13 family. As to quaternary structure, part of the 30S ribosomal subunit. Forms a loose heterodimer with protein S19. Forms two bridges to the 50S subunit in the 70S ribosome.

Its function is as follows. Located at the top of the head of the 30S subunit, it contacts several helices of the 16S rRNA. In the 70S ribosome it contacts the 23S rRNA (bridge B1a) and protein L5 of the 50S subunit (bridge B1b), connecting the 2 subunits; these bridges are implicated in subunit movement. Contacts the tRNAs in the A and P-sites. The chain is Small ribosomal subunit protein uS13 from Bordetella bronchiseptica (strain ATCC BAA-588 / NCTC 13252 / RB50) (Alcaligenes bronchisepticus).